Reading from the N-terminus, the 452-residue chain is Protein henna (452 aa).

Residues 36–107 form the ACT domain; it reads FSPKDSSLSS…EQCSYFNIIS (72 aa). The residue at position 272 (serine 272) is a Phosphoserine; by CaMK2. Positions 284, 289, and 329 each coordinate Fe cation.

The protein belongs to the biopterin-dependent aromatic amino acid hydroxylase family. It depends on Fe(2+) as a cofactor. Phenylalanine hydrolase activity is found in yolk granules of embryos, and female abdomen and fat body tissues. Tryptophan hydroxylase is expressed in serotonergic neurons. Both enzymes are present in cuticular tissues.

The enzyme catalyses (6R)-L-erythro-5,6,7,8-tetrahydrobiopterin + L-phenylalanine + O2 = (4aS,6R)-4a-hydroxy-L-erythro-5,6,7,8-tetrahydrobiopterin + L-tyrosine. It carries out the reaction (6R)-L-erythro-5,6,7,8-tetrahydrobiopterin + L-tryptophan + O2 = 5-hydroxy-L-tryptophan + (4aS,6R)-4a-hydroxy-L-erythro-5,6,7,8-tetrahydrobiopterin. The protein operates within amino-acid degradation; L-phenylalanine degradation; acetoacetate and fumarate from L-phenylalanine: step 1/6. Its activity is regulated as follows. N-terminal region of PAH is thought to contain allosteric binding sites for phenylalanine and to constitute an 'inhibitory' domain that regulates the activity of a catalytic domain in the C-terminal portion of the molecule. The protein is Protein henna (Hn) of Drosophila melanogaster (Fruit fly).